A 203-amino-acid polypeptide reads, in one-letter code: Cardiotrophin-1 (203 aa).

This sequence belongs to the IL-6 superfamily. Highly expressed in heart, skeletal muscle, liver, lung and kidney. Lower levels in testis and brain. No expression in spleen.

It localises to the secreted. In terms of biological role, induces cardiac myocyte hypertrophy in vitro. Binds to and activates the ILST/gp130 receptor. This chain is Cardiotrophin-1 (Ctf1), found in Mus musculus (Mouse).